The sequence spans 122 residues: Small ribosomal subunit protein uS13 (122 aa).

Residues Arg94–Lys122 are disordered.

Belongs to the universal ribosomal protein uS13 family. As to quaternary structure, part of the 30S ribosomal subunit. Forms a loose heterodimer with protein S19. Forms two bridges to the 50S subunit in the 70S ribosome.

Functionally, located at the top of the head of the 30S subunit, it contacts several helices of the 16S rRNA. In the 70S ribosome it contacts the 23S rRNA (bridge B1a) and protein L5 of the 50S subunit (bridge B1b), connecting the 2 subunits; these bridges are implicated in subunit movement. Contacts the tRNAs in the A and P-sites. This chain is Small ribosomal subunit protein uS13, found in Syntrophotalea carbinolica (strain DSM 2380 / NBRC 103641 / GraBd1) (Pelobacter carbinolicus).